The following is a 611-amino-acid chain: Dihydroxy-acid dehydratase (611 aa).

Asp81 contacts Mg(2+). Cys122 is a [2Fe-2S] cluster binding site. 2 residues coordinate Mg(2+): Asp123 and Lys124. Lys124 bears the N6-carboxylysine mark. Cys195 serves as a coordination point for [2Fe-2S] cluster. Mg(2+) is bound at residue Glu491. Ser517 serves as the catalytic Proton acceptor.

This sequence belongs to the IlvD/Edd family. In terms of assembly, homodimer. [2Fe-2S] cluster serves as cofactor. Mg(2+) is required as a cofactor.

It carries out the reaction (2R)-2,3-dihydroxy-3-methylbutanoate = 3-methyl-2-oxobutanoate + H2O. The catalysed reaction is (2R,3R)-2,3-dihydroxy-3-methylpentanoate = (S)-3-methyl-2-oxopentanoate + H2O. It participates in amino-acid biosynthesis; L-isoleucine biosynthesis; L-isoleucine from 2-oxobutanoate: step 3/4. It functions in the pathway amino-acid biosynthesis; L-valine biosynthesis; L-valine from pyruvate: step 3/4. Functionally, functions in the biosynthesis of branched-chain amino acids. Catalyzes the dehydration of (2R,3R)-2,3-dihydroxy-3-methylpentanoate (2,3-dihydroxy-3-methylvalerate) into 2-oxo-3-methylpentanoate (2-oxo-3-methylvalerate) and of (2R)-2,3-dihydroxy-3-methylbutanoate (2,3-dihydroxyisovalerate) into 2-oxo-3-methylbutanoate (2-oxoisovalerate), the penultimate precursor to L-isoleucine and L-valine, respectively. The protein is Dihydroxy-acid dehydratase of Brucella suis (strain ATCC 23445 / NCTC 10510).